The following is a 274-amino-acid chain: Elongation factor Ts (274 aa).

An involved in Mg(2+) ion dislocation from EF-Tu region spans residues 79–82; the sequence is TDFV.

It belongs to the EF-Ts family.

It localises to the cytoplasm. Functionally, associates with the EF-Tu.GDP complex and induces the exchange of GDP to GTP. It remains bound to the aminoacyl-tRNA.EF-Tu.GTP complex up to the GTP hydrolysis stage on the ribosome. The chain is Elongation factor Ts from Porphyromonas gingivalis (strain ATCC 33277 / DSM 20709 / CIP 103683 / JCM 12257 / NCTC 11834 / 2561).